The sequence spans 203 residues: Small ribosomal subunit protein uS4 (203 aa).

The S4 RNA-binding domain maps to 93-153 (RRLDNVVYRL…EKSKNLQQVK (61 aa)).

This sequence belongs to the universal ribosomal protein uS4 family. In terms of assembly, part of the 30S ribosomal subunit. Contacts protein S5. The interaction surface between S4 and S5 is involved in control of translational fidelity.

In terms of biological role, one of the primary rRNA binding proteins, it binds directly to 16S rRNA where it nucleates assembly of the body of the 30S subunit. Its function is as follows. With S5 and S12 plays an important role in translational accuracy. The sequence is that of Small ribosomal subunit protein uS4 from Lactobacillus delbrueckii subsp. bulgaricus (strain ATCC 11842 / DSM 20081 / BCRC 10696 / JCM 1002 / NBRC 13953 / NCIMB 11778 / NCTC 12712 / WDCM 00102 / Lb 14).